We begin with the raw amino-acid sequence, 216 residues long: Imidazoleglycerol-phosphate dehydratase (216 aa).

Position 211 is a phosphoserine (serine 211).

This sequence belongs to the imidazoleglycerol-phosphate dehydratase family.

The enzyme catalyses D-erythro-1-(imidazol-4-yl)glycerol 3-phosphate = 3-(imidazol-4-yl)-2-oxopropyl phosphate + H2O. The protein operates within amino-acid biosynthesis; L-histidine biosynthesis; L-histidine from 5-phospho-alpha-D-ribose 1-diphosphate: step 6/9. In Schizosaccharomyces pombe (strain 972 / ATCC 24843) (Fission yeast), this protein is Imidazoleglycerol-phosphate dehydratase (his5).